A 348-amino-acid polypeptide reads, in one-letter code: Probable dual-specificity RNA methyltransferase RlmN (348 aa).

The Proton acceptor role is filled by E89. Residues 95 to 328 (HKNRNTVCVS…VTLRISYGSK (234 aa)) form the Radical SAM core domain. C102 and C333 are disulfide-bonded. Residues C109, C113, and C116 each coordinate [4Fe-4S] cluster. S-adenosyl-L-methionine contacts are provided by residues 159–160 (GE), S191, 214–216 (SLH), and N290. C333 serves as the catalytic S-methylcysteine intermediate.

This sequence belongs to the radical SAM superfamily. RlmN family. The cofactor is [4Fe-4S] cluster.

It localises to the cytoplasm. It catalyses the reaction adenosine(2503) in 23S rRNA + 2 reduced [2Fe-2S]-[ferredoxin] + 2 S-adenosyl-L-methionine = 2-methyladenosine(2503) in 23S rRNA + 5'-deoxyadenosine + L-methionine + 2 oxidized [2Fe-2S]-[ferredoxin] + S-adenosyl-L-homocysteine. It carries out the reaction adenosine(37) in tRNA + 2 reduced [2Fe-2S]-[ferredoxin] + 2 S-adenosyl-L-methionine = 2-methyladenosine(37) in tRNA + 5'-deoxyadenosine + L-methionine + 2 oxidized [2Fe-2S]-[ferredoxin] + S-adenosyl-L-homocysteine. Functionally, specifically methylates position 2 of adenine 2503 in 23S rRNA and position 2 of adenine 37 in tRNAs. The protein is Probable dual-specificity RNA methyltransferase RlmN of Dictyoglomus turgidum (strain DSM 6724 / Z-1310).